The following is a 360-amino-acid chain: sn-glycerol-3-phosphate import ATP-binding protein UgpC (360 aa).

An ABC transporter domain is found at 4 to 235 (LSLKGVRKSY…PATTFVASFI (232 aa)). Residue 37-44 (GPSGCGKS) participates in ATP binding.

Belongs to the ABC transporter superfamily. sn-glycerol-3-phosphate importer (TC 3.A.1.1.3) family. As to quaternary structure, the complex is composed of two ATP-binding proteins (UgpC), two transmembrane proteins (UgpA and UgpE) and a solute-binding protein (UgpB).

Its subcellular location is the cell inner membrane. The enzyme catalyses sn-glycerol 3-phosphate(out) + ATP + H2O = sn-glycerol 3-phosphate(in) + ADP + phosphate + H(+). In terms of biological role, part of the ABC transporter complex UgpBAEC involved in sn-glycerol-3-phosphate (G3P) import. Responsible for energy coupling to the transport system. The chain is sn-glycerol-3-phosphate import ATP-binding protein UgpC from Burkholderia pseudomallei (strain K96243).